A 249-amino-acid chain; its full sequence is MSIVMQLQDVAESTRLGPLSGEVRAGEILHLVGPNGAGKSTLLARMAGMTSGKGSIQFAGQPLEAWSATKLALHRAYLSQQQTPPFATPVWHYLTLHQHDKTRTELLNDVAGALALDDKLGRSTNQLSGGEWQRVRLAAVVLQITPQANPAGQLLLLDEPMNSLDVAQQSALDKILSALCQQGLAIVMSSHDLNHTLRHAHRAWLLKGGKMLASGRREEVLTPPNLAQAYGMNFRRLDIEGHRMLISTI.

The 233-residue stretch at 1 to 233 (MSIVMQLQDV…PNLAQAYGMN (233 aa)) folds into the ABC transporter domain. An ATP-binding site is contributed by 33 to 40 (GPNGAGKS).

Belongs to the ABC transporter superfamily. Vitamin B12 importer (TC 3.A.1.13.1) family. In terms of assembly, the complex is composed of two ATP-binding proteins (BtuD), two transmembrane proteins (BtuC) and a solute-binding protein (BtuF).

Its subcellular location is the cell inner membrane. The enzyme catalyses an R-cob(III)alamin(out) + ATP + H2O = an R-cob(III)alamin(in) + ADP + phosphate + H(+). Its function is as follows. Part of the ABC transporter complex BtuCDF involved in vitamin B12 import. Responsible for energy coupling to the transport system. The protein is Vitamin B12 import ATP-binding protein BtuD of Escherichia coli (strain K12 / DH10B).